Reading from the N-terminus, the 452-residue chain is Ribosomal protein uS12 methylthiotransferase RimO (452 aa).

The MTTase N-terminal domain maps to 3-118 (GKIGFVSLGC…VMQVIHLHLP (116 aa)). Cysteine 12, cysteine 48, cysteine 77, cysteine 149, cysteine 153, and cysteine 156 together coordinate [4Fe-4S] cluster. Residues 135-382 (LTPKHYAYLK…AKAEEISVGR (248 aa)) form the Radical SAM core domain. The TRAM domain maps to 384–452 (AKKIGKRLQV…SQGHDLIAET (69 aa)).

Belongs to the methylthiotransferase family. RimO subfamily. [4Fe-4S] cluster is required as a cofactor.

It is found in the cytoplasm. The enzyme catalyses L-aspartate(89)-[ribosomal protein uS12]-hydrogen + (sulfur carrier)-SH + AH2 + 2 S-adenosyl-L-methionine = 3-methylsulfanyl-L-aspartate(89)-[ribosomal protein uS12]-hydrogen + (sulfur carrier)-H + 5'-deoxyadenosine + L-methionine + A + S-adenosyl-L-homocysteine + 2 H(+). Catalyzes the methylthiolation of an aspartic acid residue of ribosomal protein uS12. This Polynucleobacter necessarius subsp. necessarius (strain STIR1) protein is Ribosomal protein uS12 methylthiotransferase RimO.